Here is a 417-residue protein sequence, read N- to C-terminus: MQTYLVGGAVRDYLLGLPVKDRDWVVVGADAQTMLAQGFQPVGKDFPVFLHPETHEEYALARTERKTAKGYAGFSFHADKDVTLEQDLMRRDLTINAMAQDAGGKIIDPFGGQRDLAAGILRHVSPAFAEDPVRILRTARFAARYRFEIAEETIKLMRQMVENGEADALVAERVWQELAKGLMEKNPRKMIEVLRECGALKVLLPEVNALFGVPQRADYHPEIDSGIHTLMTLQRAADMGLSLPERYAALLHDLGKAKTPPDILPRHHGHDLAGVEPVREVNQRLRAPKHCAELAELVCRWHIIFHQVGQLKSQTILNVLKKTDAFRRPERFQTALNVCIADTQGRLNREHTPYPQRAHWLALLEAANQADSGKIAAECRAQGKAHLIAEQIDRMRLAQIAPLQKAFQAAQDKTEKH.

Residues Gly8 and Arg11 each coordinate ATP. Residues Gly8 and Arg11 each coordinate CTP. Positions 21 and 23 each coordinate Mg(2+). Residues Arg91, Arg137, and Arg140 each contribute to the ATP site. Arg91, Arg137, and Arg140 together coordinate CTP. The region spanning 225 to 326 (SGIHTLMTLQ…LNVLKKTDAF (102 aa)) is the HD domain.

It belongs to the tRNA nucleotidyltransferase/poly(A) polymerase family. Bacterial CCA-adding enzyme type 1 subfamily. In terms of assembly, monomer. Can also form homodimers and oligomers. Mg(2+) serves as cofactor. It depends on Ni(2+) as a cofactor.

It catalyses the reaction a tRNA precursor + 2 CTP + ATP = a tRNA with a 3' CCA end + 3 diphosphate. The enzyme catalyses a tRNA with a 3' CCA end + 2 CTP + ATP = a tRNA with a 3' CCACCA end + 3 diphosphate. In terms of biological role, catalyzes the addition and repair of the essential 3'-terminal CCA sequence in tRNAs without using a nucleic acid template. Adds these three nucleotides in the order of C, C, and A to the tRNA nucleotide-73, using CTP and ATP as substrates and producing inorganic pyrophosphate. tRNA 3'-terminal CCA addition is required both for tRNA processing and repair. Also involved in tRNA surveillance by mediating tandem CCA addition to generate a CCACCA at the 3' terminus of unstable tRNAs. While stable tRNAs receive only 3'-terminal CCA, unstable tRNAs are marked with CCACCA and rapidly degraded. The polypeptide is Multifunctional CCA protein (Neisseria meningitidis serogroup C (strain 053442)).